Reading from the N-terminus, the 428-residue chain is 3-phosphoshikimate 1-carboxyvinyltransferase (428 aa).

3-phosphoshikimate is bound by residues Lys21, Ser22, and Arg26. Residue Lys21 coordinates phosphoenolpyruvate. Residues Gly91 and Arg119 each contribute to the phosphoenolpyruvate site. 3-phosphoshikimate contacts are provided by Ser164, Gln166, Asp313, and Lys340. Residue Gln166 coordinates phosphoenolpyruvate. Asp313 (proton acceptor) is an active-site residue. The phosphoenolpyruvate site is built by Arg344 and Arg386.

This sequence belongs to the EPSP synthase family. In terms of assembly, monomer.

It localises to the cytoplasm. It carries out the reaction 3-phosphoshikimate + phosphoenolpyruvate = 5-O-(1-carboxyvinyl)-3-phosphoshikimate + phosphate. It participates in metabolic intermediate biosynthesis; chorismate biosynthesis; chorismate from D-erythrose 4-phosphate and phosphoenolpyruvate: step 6/7. Functionally, catalyzes the transfer of the enolpyruvyl moiety of phosphoenolpyruvate (PEP) to the 5-hydroxyl of shikimate-3-phosphate (S3P) to produce enolpyruvyl shikimate-3-phosphate and inorganic phosphate. The polypeptide is 3-phosphoshikimate 1-carboxyvinyltransferase (Campylobacter jejuni subsp. jejuni serotype O:23/36 (strain 81-176)).